Consider the following 366-residue polypeptide: Aminomethyltransferase (366 aa).

The protein belongs to the GcvT family. As to quaternary structure, the glycine cleavage system is composed of four proteins: P, T, L and H.

It catalyses the reaction N(6)-[(R)-S(8)-aminomethyldihydrolipoyl]-L-lysyl-[protein] + (6S)-5,6,7,8-tetrahydrofolate = N(6)-[(R)-dihydrolipoyl]-L-lysyl-[protein] + (6R)-5,10-methylene-5,6,7,8-tetrahydrofolate + NH4(+). In terms of biological role, the glycine cleavage system catalyzes the degradation of glycine. This Thermosynechococcus vestitus (strain NIES-2133 / IAM M-273 / BP-1) protein is Aminomethyltransferase.